Here is a 112-residue protein sequence, read N- to C-terminus: Nucleoid-associated protein Pfl01_1806 (112 aa).

It belongs to the YbaB/EbfC family. In terms of assembly, homodimer.

The protein localises to the cytoplasm. The protein resides in the nucleoid. Binds to DNA and alters its conformation. May be involved in regulation of gene expression, nucleoid organization and DNA protection. This Pseudomonas fluorescens (strain Pf0-1) protein is Nucleoid-associated protein Pfl01_1806.